Consider the following 76-residue polypeptide: Immune protein Tsi5 (76 aa).

2 helical membrane-spanning segments follow: residues 19 to 39 (LLMTLVCIPLALLYVCLEWFF) and 43 to 63 (WVTVGVFFGVLVVLRLGLYLY).

The protein localises to the membrane. Its function is as follows. Immunity protein that plays a role in preventing early activation of toxin Tse5. This chain is Immune protein Tsi5, found in Pseudomonas aeruginosa (strain ATCC 15692 / DSM 22644 / CIP 104116 / JCM 14847 / LMG 12228 / 1C / PRS 101 / PAO1).